The chain runs to 237 residues: Large ribosomal subunit protein uL1 (237 aa).

It belongs to the universal ribosomal protein uL1 family. In terms of assembly, part of the 50S ribosomal subunit.

In terms of biological role, binds directly to 23S rRNA. The L1 stalk is quite mobile in the ribosome, and is involved in E site tRNA release. Functionally, protein L1 is also a translational repressor protein, it controls the translation of the L11 operon by binding to its mRNA. The sequence is that of Large ribosomal subunit protein uL1 from Thermosynechococcus vestitus (strain NIES-2133 / IAM M-273 / BP-1).